Reading from the N-terminus, the 381-residue chain is Flap endonuclease 1 (381 aa).

Residues 1-105 (MGVKGLNQLI…GELEKRLLKR (105 aa)) are N-domain. A Mg(2+)-binding site is contributed by D34. DNA is bound by residues R47 and R71. Mg(2+)-binding residues include D87, E159, E161, D180, and D182. An I-domain region spans residues 123–254 (EVMKFEKRLV…VTAYKLIKEH (132 aa)). E159 is a binding site for DNA. DNA is bound by residues G232 and D234. D234 is a binding site for Mg(2+). The segment at 340 to 348 (VQGRLDGFF) is interaction with PCNA. The disordered stretch occupies residues 354-381 (PGAKAGDKKGDKKRGSDSKASNNKKKRK). Residues 358-370 (AGDKKGDKKRGSD) show a composition bias toward basic and acidic residues.

Belongs to the XPG/RAD2 endonuclease family. FEN1 subfamily. Interacts with PCNA. Three molecules of FEN1 bind to one PCNA trimer with each molecule binding to one PCNA monomer. PCNA stimulates the nuclease activity without altering cleavage specificity. The cofactor is Mg(2+). In terms of processing, phosphorylated. Phosphorylation upon DNA damage induces relocalization to the nuclear plasma.

The protein resides in the nucleus. It localises to the nucleolus. Its subcellular location is the nucleoplasm. The protein localises to the mitochondrion. Its function is as follows. Structure-specific nuclease with 5'-flap endonuclease and 5'-3' exonuclease activities involved in DNA replication and repair. During DNA replication, cleaves the 5'-overhanging flap structure that is generated by displacement synthesis when DNA polymerase encounters the 5'-end of a downstream Okazaki fragment. It enters the flap from the 5'-end and then tracks to cleave the flap base, leaving a nick for ligation. Also involved in the long patch base excision repair (LP-BER) pathway, by cleaving within the apurinic/apyrimidinic (AP) site-terminated flap. Acts as a genome stabilization factor that prevents flaps from equilibrating into structures that lead to duplications and deletions. Also possesses 5'-3' exonuclease activity on nicked or gapped double-stranded DNA, and exhibits RNase H activity. Also involved in replication and repair of rDNA and in repairing mitochondrial DNA. This chain is Flap endonuclease 1, found in Scheffersomyces stipitis (strain ATCC 58785 / CBS 6054 / NBRC 10063 / NRRL Y-11545) (Yeast).